The primary structure comprises 457 residues: Adenylosuccinate synthetase (457 aa).

Residues 45 to 51 and 73 to 75 each bind GTP; these read GDEGKGK and GHT. The active-site Proton acceptor is the Asp-46. The Mg(2+) site is built by Asp-46 and Gly-73. IMP contacts are provided by residues 46 to 49, 71 to 74, Thr-163, Arg-177, Asn-255, Thr-270, and Arg-334; these read DEGK and NAGH. His-74 functions as the Proton donor in the catalytic mechanism. 330-336 is a binding site for substrate; sequence VTTKRVR. GTP is bound by residues Arg-336, 362 to 364, and 444 to 446; these read KLD and GVG.

It belongs to the adenylosuccinate synthetase family. In terms of assembly, homodimer. Mg(2+) serves as cofactor.

The protein resides in the cytoplasm. The enzyme catalyses IMP + L-aspartate + GTP = N(6)-(1,2-dicarboxyethyl)-AMP + GDP + phosphate + 2 H(+). It functions in the pathway purine metabolism; AMP biosynthesis via de novo pathway; AMP from IMP: step 1/2. Plays an important role in the de novo pathway and in the salvage pathway of purine nucleotide biosynthesis. Catalyzes the first committed step in the biosynthesis of AMP from IMP. This Aedes aegypti (Yellowfever mosquito) protein is Adenylosuccinate synthetase.